We begin with the raw amino-acid sequence, 373 residues long: D-alanine--D-alanine ligase (373 aa).

One can recognise an ATP-grasp domain in the interval 156-363 (KKLLAADGLP…YPTLLATMIE (208 aa)). Residue 184–239 (CERLGLPVFVKPARGGSSIGVSRVSSWDQLPAAVARARRHDPKVIVEAAISGRELE) coordinates ATP. Positions 318, 330, and 332 each coordinate Mg(2+).

Belongs to the D-alanine--D-alanine ligase family. Mg(2+) is required as a cofactor. It depends on Mn(2+) as a cofactor.

The protein localises to the cytoplasm. The enzyme catalyses 2 D-alanine + ATP = D-alanyl-D-alanine + ADP + phosphate + H(+). It participates in cell wall biogenesis; peptidoglycan biosynthesis. Cell wall formation. The chain is D-alanine--D-alanine ligase from Mycobacterium bovis (strain BCG / Pasteur 1173P2).